We begin with the raw amino-acid sequence, 79 residues long: Short neurotoxin 3 (79 aa).

Residues 1–23 (MKTLLLTLVVMTIVCLDLGYTLT) form the signal peptide. Disulfide bonds link Cys-24/Cys-41, Cys-34/Cys-59, Cys-63/Cys-71, and Cys-72/Cys-77.

Belongs to the three-finger toxin family. Short-chain subfamily. Expressed by the venom gland.

Its subcellular location is the secreted. The chain is Short neurotoxin 3 from Oxyuranus scutellatus scutellatus (Australian taipan).